Here is a 107-residue protein sequence, read N- to C-terminus: ATP-dependent Clp protease adapter protein ClpS (107 aa).

Residues M1 to D12 show a composition bias toward basic and acidic residues. The disordered stretch occupies residues M1–P21.

Belongs to the ClpS family. As to quaternary structure, binds to the N-terminal domain of the chaperone ClpA.

Functionally, involved in the modulation of the specificity of the ClpAP-mediated ATP-dependent protein degradation. The sequence is that of ATP-dependent Clp protease adapter protein ClpS from Zymomonas mobilis subsp. mobilis (strain ATCC 31821 / ZM4 / CP4).